We begin with the raw amino-acid sequence, 1379 residues long: ABC multidrug transporter MDR2 (1379 aa).

The helical transmembrane segment at 65–85 (IALIVIGTIAGIGAGIPFPLL) threads the bilayer. An ABC transmembrane type-1 1 domain is found at 69 to 367 (VIGTIAGIGA…MAPFMHIFAS (299 aa)). An N-linked (GlcNAc...) asparagine glycan is attached at N97. The next 5 helical transmembrane spans lie at 119-139 (VLQVIYVSILNFVCMYIHTGC), 193-213 (KVGLFIGTISYFVAAYIVAFL), 215-235 (VATIAAMLMSVVPIYFLMAFG), 301-321 (IQFGMLYFVAYASNALAFWQG), and 336-356 (VSVGAVYTVIFVLLDASFVLS). Residues 403 to 682 (IELQDVTFNY…DGVYAGMVRL (280 aa)) enclose the ABC transporter 1 domain. 438–445 (GTSGSGKS) is a binding site for ATP. N-linked (GlcNAc...) asparagine glycosylation is found at N552 and N633. The segment at 738–758 (YMPEEADSLPTEPENEKEKPK) is disordered. The next 4 helical transmembrane spans lie at 781-801 (LGLITSIMIGVSYTGEAVIFG), 820-840 (GMLFGLLFFILAIVKFAAVIV), 881-901 (LLVALVTSDASALSSLTGTTI), and 920-942 (VIAWKIAVVLLATLPVLLASGVL). The ABC transmembrane type-1 2 domain maps to 781–1068 (LGLITSIMIG…MFALVPDISK (288 aa)). Residue N989 is glycosylated (N-linked (GlcNAc...) asparagine). A run of 2 helical transmembrane segments spans residues 1008–1028 (FWLSLAYSISTLVYALAYWWG) and 1032–1052 (ILAGMYTQVQFFIVLPALLFS). One can recognise an ABC transporter 2 domain in the interval 1135-1374 (VQFRNVHFRY…CESYRANVIH (240 aa)). 1170–1177 (GPSGSGKS) provides a ligand contact to ATP.

This sequence belongs to the ABC transporter superfamily. ABCB family. Multidrug resistance exporter (TC 3.A.1.201) subfamily.

It localises to the cell membrane. In terms of biological role, pleiotropic ABC efflux transporter that may be involved in the modulation susceptibility to a wide range of unrelated cytotoxic compounds. In Trichophyton interdigitale (strain MR816), this protein is ABC multidrug transporter MDR2.